The sequence spans 312 residues: Transcription factor SOX-3 (312 aa).

The disordered stretch occupies residues M1–A23. Positions V46–K114 form a DNA-binding region, HMG box. The tract at residues S229–S254 is disordered. A 9aaTAD motif is present at residues E263 to P274.

First expressed in the embryonic neural plate shortly before closure and expression continues in the neural tube. From stage 16 onwards, expressed throughout the CNS including the brain, with expression predominant in the undifferentiated cells of the neural epithelium. Also expressed at a low level in the retina and the gut epithelium.

It is found in the nucleus. Functionally, transcription factor that may function as a switch in neuronal development. Keeps neural cells undifferentiated by counteracting the activity of proneural proteins and suppresses neuronal differentiation. The chain is Transcription factor SOX-3 (SOX3) from Gallus gallus (Chicken).